The sequence spans 681 residues: Translation factor GUF1 homolog, chloroplastic (681 aa).

The transit peptide at 1-51 (MAMASAMDLSSPPTFFLSGTSTSSPSLRRLSSISVSGFRRHSNRKLQILCQ) directs the protein to the chloroplast. One can recognise a tr-type G domain in the interval 84 to 265 (SNIRNFSIIA…AIVQRIPAPL (182 aa)). GTP-binding positions include 93-100 (AHIDHGKS), 158-162 (DTPGH), and 212-215 (NKID).

The protein belongs to the TRAFAC class translation factor GTPase superfamily. Classic translation factor GTPase family. LepA subfamily.

Its subcellular location is the plastid. The protein resides in the chloroplast. The enzyme catalyses GTP + H2O = GDP + phosphate + H(+). Functionally, promotes chloroplast protein synthesis. May act as a fidelity factor of the translation reaction, by catalyzing a one-codon backward translocation of tRNAs on improperly translocated ribosomes. The protein is Translation factor GUF1 homolog, chloroplastic of Arabidopsis thaliana (Mouse-ear cress).